The sequence spans 413 residues: Zinc finger CCCH domain-containing protein 6 (413 aa).

Disordered stretches follow at residues 28–61 (PSQV…FGGP), 159–191 (DSAS…TLPA), and 333–356 (QPGG…RDSK). The segment covering 176–189 (PSITDENTSTSSTL) has biased composition (polar residues). A C3H1-type zinc finger spans residues 357 to 385 (PKIMKACMYFNSARGCRHGANCMYQHDAT). A compositionally biased stretch (polar residues) spans 389 to 403 (PRNLNNGNINTSDMQ). The interval 389 to 413 (PRNLNNGNINTSDMQNAKRMRFDRD) is disordered.

This Arabidopsis thaliana (Mouse-ear cress) protein is Zinc finger CCCH domain-containing protein 6.